Consider the following 127-residue polypeptide: Small ribosomal subunit protein uS11 (127 aa).

This sequence belongs to the universal ribosomal protein uS11 family. As to quaternary structure, part of the 30S ribosomal subunit.

Functionally, located on the platform of the 30S subunit. This Halobacterium salinarum (strain ATCC 700922 / JCM 11081 / NRC-1) (Halobacterium halobium) protein is Small ribosomal subunit protein uS11.